A 152-amino-acid polypeptide reads, in one-letter code: Ribosome maturation factor RimP (152 aa).

It belongs to the RimP family.

Its subcellular location is the cytoplasm. Its function is as follows. Required for maturation of 30S ribosomal subunits. This is Ribosome maturation factor RimP from Pseudothermotoga lettingae (strain ATCC BAA-301 / DSM 14385 / NBRC 107922 / TMO) (Thermotoga lettingae).